The primary structure comprises 840 residues: MASPMEAVARSSLVLAPRRRRALGLLPAAAAPFVLDCRRRHNGGMRRPHVSFACSAELDTGRRQLPSTGTRAVMSSCPGYVEGRMVGENTSQINMGREARIRRHLENPEFLPSSYDIAWVAMVPLPGTDHLQAPCFPECVEWILQNQHSNGSWGVNEFDSSASKDILLSTLACIIALEKWNVGSEQIRRGLHFIAKNFSIVIDDQIAAPIGFNLTFPAMVNLAIKMGLEFPASEISIDQILHLRDMELKRLSGEESLGKEAYFAYIAEGLEESMVDWSEVMKFQGKNGSLFNSPAATAAALVHRYDDKALGYLYSVVNKFGGEVPTVYPLNIFSQLSMVDTLVNIGISRHFSSDIKRILDKTYILWSQRDEEVMLDLPTCAMAFRLLRMNGYGVSSDDLSHVAEASTFHNSVEGYLDDTKSLLELYKASKVSLSENEPILEKMGCWSGSLLKEKLCSDDIRGTPILGEVEYALKFPFYATLEPLDHKWNIENFDARAYQKIKTKNMPCHVNEDLLALAAEDFSFCQSTYQNEIQHLESWEKENKLDQLEFTRKNLINSYLSAAATISPYELSDARIACAKSIALTLVADDFFDVGSSKEEQENLISLVEKWDQYHKVEFYSENVKAVFFALYSTVNQLGAMASAVQNRDVTKYNVESWLDYLRSLATDAEWQRSKYVPTMEEYMKNSIVTFALGPTILIALYFMGQNLWEDIVKNAEYDELFRLMNTCGRLQNDIQSFERECKDGKLNSVSLLVLDSKDVMSVEEAKEAINESISSCRRELLRLVVREDGVIPKSCKEMFWNLYKTSHVFYSQADGFSSPKEMMGAMNGVIFEPLKTRGN.

The N-terminal 56 residues, 1-56 (MASPMEAVARSSLVLAPRRRRALGLLPAAAAPFVLDCRRRHNGGMRRPHVSFACSA), are a transit peptide targeting the chloroplast. 5 residues coordinate Mg(2+): D589, D593, N733, S737, and E741. Positions 589–593 (DDFFD) match the DDXXD motif motif.

Belongs to the terpene synthase family. Mg(2+) serves as cofactor.

The protein localises to the plastid. It localises to the chloroplast. It carries out the reaction 9alpha-copalyl diphosphate = 9beta-pimara-7,15-diene + diphosphate. In terms of biological role, involved in the biosynthesis of momilactone A and B phytoalexins. Catalyzes the conversion of syn-copalyl diphosphate to the phytoalexin precursor syn-pimara-7,15-diene. In Oryza sativa subsp. indica (Rice), this protein is 9-beta-pimara-7,15-diene synthase, chloroplastic.